Reading from the N-terminus, the 342-residue chain is N-acetyl-gamma-glutamyl-phosphate reductase (342 aa).

Cys-146 is an active-site residue.

It belongs to the NAGSA dehydrogenase family. Type 1 subfamily.

The protein localises to the cytoplasm. The catalysed reaction is N-acetyl-L-glutamate 5-semialdehyde + phosphate + NADP(+) = N-acetyl-L-glutamyl 5-phosphate + NADPH + H(+). Its pathway is amino-acid biosynthesis; L-arginine biosynthesis; N(2)-acetyl-L-ornithine from L-glutamate: step 3/4. Catalyzes the NADPH-dependent reduction of N-acetyl-5-glutamyl phosphate to yield N-acetyl-L-glutamate 5-semialdehyde. The protein is N-acetyl-gamma-glutamyl-phosphate reductase of Frankia casuarinae (strain DSM 45818 / CECT 9043 / HFP020203 / CcI3).